Reading from the N-terminus, the 321-residue chain is Ornithine carbamoyltransferase (321 aa).

Carbamoyl phosphate contacts are provided by residues 53 to 56 (STRT), Gln80, Arg104, and 131 to 134 (HPCQ). L-ornithine contacts are provided by residues Asn166, Asp230, and 234 to 235 (SM). Residues 270–271 (CL) and Arg298 contribute to the carbamoyl phosphate site.

The protein belongs to the aspartate/ornithine carbamoyltransferase superfamily. OTCase family.

It is found in the cytoplasm. It carries out the reaction carbamoyl phosphate + L-ornithine = L-citrulline + phosphate + H(+). Its pathway is amino-acid degradation; L-arginine degradation via ADI pathway; carbamoyl phosphate from L-arginine: step 2/2. Its function is as follows. Reversibly catalyzes the transfer of the carbamoyl group from carbamoyl phosphate (CP) to the N(epsilon) atom of ornithine (ORN) to produce L-citrulline. This is Ornithine carbamoyltransferase from Bifidobacterium longum subsp. infantis (strain ATCC 15697 / DSM 20088 / JCM 1222 / NCTC 11817 / S12).